The following is a 191-amino-acid chain: Photosystem I assembly protein Ycf4 (191 aa).

The next 2 membrane-spanning stretches (helical) occupy residues Leu-33–Tyr-53 and Leu-74–Ile-94.

This sequence belongs to the Ycf4 family.

The protein localises to the cellular thylakoid membrane. Functionally, seems to be required for the assembly of the photosystem I complex. The protein is Photosystem I assembly protein Ycf4 of Prochlorococcus marinus (strain MIT 9303).